Here is a 482-residue protein sequence, read N- to C-terminus: Class E basic helix-loop-helix protein 41 (482 aa).

A Glycyl lysine isopeptide (Lys-Gly) (interchain with G-Cter in SUMO2) cross-link involves residue K31. The region spanning 44-99 is the bHLH domain; that stretch reads TYKLPHRLIEKKRRDRINECIAQLKDLLPEHLKLTTLGHLEKAVVLELTLKHLKAL. The tract at residues 67–71 is necessary for interaction with RXRA and repressor activity towards RXRA; the sequence is LKDLL. Residue K121 forms a Glycyl lysine isopeptide (Lys-Gly) (interchain with G-Cter in SUMO2) linkage. The Orange domain maps to 131–166; that stretch reads FHSGFQTCAKEVLQYLSRFESWTPREPRCVQLINHL. A Glycyl lysine isopeptide (Lys-Gly) (interchain with G-Cter in SUMO2) cross-link involves residue K210. Disordered regions lie at residues 228–298 and 438–482; these read AELA…GGAA and VAPL…KEAP. Residues 246 to 256 show a composition bias toward basic and acidic residues; the sequence is AEARPDREKGK. K266 participates in a covalent cross-link: Glycyl lysine isopeptide (Lys-Gly) (interchain with G-Cter in SUMO2). A compositionally biased stretch (gly residues) spans 285–297; that stretch reads RGGGSGGGPGGGA.

In terms of assembly, homodimer. Heterodimer with BHLHE40/DEC1. Interacts with CIART and BMAL1. Interacts with RXRA. Interacts with NR0B2 and HNF1A. In terms of tissue distribution, highly expressed in skeletal muscle and brain, moderately expressed in pancreas and heart, weakly expressed in placenta, lung, liver and kidney.

The protein localises to the nucleus. In terms of biological role, transcriptional repressor involved in the regulation of the circadian rhythm by negatively regulating the activity of the clock genes and clock-controlled genes. Acts as the negative limb of a novel autoregulatory feedback loop (DEC loop) which differs from the one formed by the PER and CRY transcriptional repressors (PER/CRY loop). Both these loops are interlocked as it represses the expression of PER1 and in turn is repressed by PER1/2 and CRY1/2. Represses the activity of the circadian transcriptional activator: CLOCK-BMAL1 heterodimer by competing for the binding to E-box elements (5'-CACGTG-3') found within the promoters of its target genes. Negatively regulates its own expression and the expression of DBP and BHLHE41/DEC2. Acts as a corepressor of RXR and the RXR-LXR heterodimers and represses the ligand-induced RXRA/B/G, NR1H3/LXRA, NR1H4 and VDR transactivation activity. Inhibits HNF1A-mediated transactivation of CYP1A2, CYP2E1 AND CYP3A11. The polypeptide is Class E basic helix-loop-helix protein 41 (Homo sapiens (Human)).